Reading from the N-terminus, the 853-residue chain is DNA mismatch repair protein MutS (853 aa).

An ATP-binding site is contributed by 614-621 (GPNMGGKS).

This sequence belongs to the DNA mismatch repair MutS family.

Its function is as follows. This protein is involved in the repair of mismatches in DNA. It is possible that it carries out the mismatch recognition step. This protein has a weak ATPase activity. The sequence is that of DNA mismatch repair protein MutS from Shigella boydii serotype 18 (strain CDC 3083-94 / BS512).